The chain runs to 122 residues: Large ribosomal subunit protein uL14c (122 aa).

The protein belongs to the universal ribosomal protein uL14 family. Part of the 50S ribosomal subunit.

The protein resides in the plastid. It localises to the chloroplast. Binds to 23S rRNA. The protein is Large ribosomal subunit protein uL14c of Phaseolus vulgaris (Kidney bean).